A 137-amino-acid polypeptide reads, in one-letter code: Small heat shock protein IbpA (137 aa).

One can recognise a sHSP domain in the interval 28–137 (SQSNGGYPPY…ANKPRRIEIN (110 aa)).

It belongs to the small heat shock protein (HSP20) family. In terms of assembly, monomer. Forms homomultimers of about 100-150 subunits at optimal growth temperatures. Conformation changes to monomers at high temperatures or high ionic concentrations.

The protein localises to the cytoplasm. Functionally, associates with aggregated proteins, together with IbpB, to stabilize and protect them from irreversible denaturation and extensive proteolysis during heat shock and oxidative stress. Aggregated proteins bound to the IbpAB complex are more efficiently refolded and reactivated by the ATP-dependent chaperone systems ClpB and DnaK/DnaJ/GrpE. Its activity is ATP-independent. This chain is Small heat shock protein IbpA, found in Salmonella choleraesuis (strain SC-B67).